We begin with the raw amino-acid sequence, 382 residues long: Histidinol-phosphate aminotransferase (382 aa).

An N6-(pyridoxal phosphate)lysine modification is found at Lys215. Positions 360 to 382 are disordered; sequence NSNNIDNQSKTHSQTSSIRKGTI.

It belongs to the class-II pyridoxal-phosphate-dependent aminotransferase family. Histidinol-phosphate aminotransferase subfamily. Homodimer. Pyridoxal 5'-phosphate serves as cofactor.

The enzyme catalyses L-histidinol phosphate + 2-oxoglutarate = 3-(imidazol-4-yl)-2-oxopropyl phosphate + L-glutamate. It functions in the pathway amino-acid biosynthesis; L-histidine biosynthesis; L-histidine from 5-phospho-alpha-D-ribose 1-diphosphate: step 7/9. In Yersinia pseudotuberculosis serotype IB (strain PB1/+), this protein is Histidinol-phosphate aminotransferase.